The following is a 1100-amino-acid chain: Isoleucine--tRNA ligase (1100 aa).

The short motif at 48–58 is the 'HIGH' region element; that stretch reads PFATGLPHFGH. Residues 626–630 carry the 'KMSKS' region motif; sequence KMSKS. ATP is bound at residue lysine 629.

The protein belongs to the class-I aminoacyl-tRNA synthetase family. IleS type 2 subfamily. In terms of assembly, monomer. It depends on Zn(2+) as a cofactor.

Its subcellular location is the cytoplasm. The catalysed reaction is tRNA(Ile) + L-isoleucine + ATP = L-isoleucyl-tRNA(Ile) + AMP + diphosphate. In terms of biological role, catalyzes the attachment of isoleucine to tRNA(Ile). As IleRS can inadvertently accommodate and process structurally similar amino acids such as valine, to avoid such errors it has two additional distinct tRNA(Ile)-dependent editing activities. One activity is designated as 'pretransfer' editing and involves the hydrolysis of activated Val-AMP. The other activity is designated 'posttransfer' editing and involves deacylation of mischarged Val-tRNA(Ile). This chain is Isoleucine--tRNA ligase, found in Treponema denticola (strain ATCC 35405 / DSM 14222 / CIP 103919 / JCM 8153 / KCTC 15104).